An 808-amino-acid chain; its full sequence is MFFVSAVKDYLEVLSNITDTLTGTLSFDTILKSTLLYLATSTKVFVSYIISFEWFRNISYLPIIAPDLSKAILRENYVLDTPLSNLFTFFDVPSYTSNKFVLGLLNSFFLAIPISVAHLIAFRRFIIQGLPAGLTAGLGIISGQVCFIGAVLFGVRSLVIPWFATEPLSYLIGIFLILTIIYDMAHESRIRPINLSETPLLLKIFGLSFLLTWTEQSSVFQYLANVTLGNQATLLETTTVKTDGQFLLTHISYLLGLTAGNILFTLLFGFLLLQLINQVVKFSNLPYSLCVRNLNFGILTFTLALSITSIPYYGFDYLLTAPLGFVSQDQSLEKVSLRTNLPDAIGYLGQLSESKYLDTEVTPFDRGTYLTDFATPKTYESLNYQGEYFWNSRLDRSASVTQKYRALEFNPKKDSESEIPEQVGALSPDSQANSVSPGQELSENELGLGTTKTNKQVLLNKLDQNFSRNSNPSYANLLSEVLDYSFNESFFTTSASNAPQEVALQKIEFNIKQKYYSNPLYKALLNFDIDRFISHQPVAQRLNANQEKQLFENRLILSTYYDTLRDYRLLPYSSEFQTYFNGPKSYANRVYNQQFKGTLNVVRRLFAIDIEGDSAGRSTSNSVLKFDQPLFNNFKDSSLSVYHEELNPEAVRPTKKSPFLENTSPTPFYAGWDNIQRKFIVTNRLLAREAAGNEINRASRNISSATSALTAKDYTSLGDTVKLKFTSWPDSSSKGGNSKGVNQLSLPFISVPQEKFTQVVSSLGLEDDDFGSASSTLKLPPNIKKMFEVCQISIPEVFPPKRGGFIWP.

A run of 7 helical transmembrane segments spans residues 35-55 (LLYL…FEWF), 100-120 (FVLG…AHLI), 135-155 (TAGL…LFGV), 158-178 (LVIP…FLIL), 193-213 (INLS…LLTW), 253-273 (YLLG…FLLL), and 295-315 (NFGI…YYGF). Residues 411–447 (PKKDSESEIPEQVGALSPDSQANSVSPGQELSENELG) are disordered. Over residues 428 to 441 (PDSQANSVSPGQEL) the composition is skewed to polar residues.

Belongs to the ycf78 family.

It localises to the plastid. It is found in the chloroplast membrane. This is an uncharacterized protein from Oltmannsiellopsis viridis (Marine flagellate).